The chain runs to 59 residues: Ribosome biogenesis protein Nop10 (59 aa).

The protein belongs to the NOP10 family.

Its function is as follows. Involved in ribosome biogenesis; more specifically in 18S rRNA pseudouridylation and in cleavage of pre-rRNA. The polypeptide is Ribosome biogenesis protein Nop10 (Thermococcus gammatolerans (strain DSM 15229 / JCM 11827 / EJ3)).